The primary structure comprises 176 residues: Inner membrane-spanning protein YciB (176 aa).

The next 6 helical transmembrane spans lie at 3 to 23 (FLFD…WGIF), 24 to 44 (TATA…AFRH), 49 to 69 (TMLW…LVLH), 72 to 92 (KFIQ…LLAA), 121 to 141 (LAWA…VHNF), and 149 to 169 (FKLF…SLWL).

Belongs to the YciB family.

It is found in the cell inner membrane. Plays a role in cell envelope biogenesis, maintenance of cell envelope integrity and membrane homeostasis. The chain is Inner membrane-spanning protein YciB from Burkholderia cenocepacia (strain ATCC BAA-245 / DSM 16553 / LMG 16656 / NCTC 13227 / J2315 / CF5610) (Burkholderia cepacia (strain J2315)).